Reading from the N-terminus, the 156-residue chain is Small ribosomal subunit protein uS7 (156 aa).

Belongs to the universal ribosomal protein uS7 family. As to quaternary structure, part of the 30S ribosomal subunit. Contacts proteins S9 and S11.

Its function is as follows. One of the primary rRNA binding proteins, it binds directly to 16S rRNA where it nucleates assembly of the head domain of the 30S subunit. Is located at the subunit interface close to the decoding center, probably blocks exit of the E-site tRNA. The sequence is that of Small ribosomal subunit protein uS7 from Actinobacillus pleuropneumoniae serotype 5b (strain L20).